A 154-amino-acid chain; its full sequence is D-aminoacyl-tRNA deacylase (154 aa).

The short motif at 142–143 (GP) is the Gly-cisPro motif, important for rejection of L-amino acids element.

It belongs to the DTD family. In terms of assembly, homodimer.

It is found in the cytoplasm. It carries out the reaction glycyl-tRNA(Ala) + H2O = tRNA(Ala) + glycine + H(+). The enzyme catalyses a D-aminoacyl-tRNA + H2O = a tRNA + a D-alpha-amino acid + H(+). Its function is as follows. An aminoacyl-tRNA editing enzyme that deacylates mischarged D-aminoacyl-tRNAs. Also deacylates mischarged glycyl-tRNA(Ala), protecting cells against glycine mischarging by AlaRS. Acts via tRNA-based rather than protein-based catalysis; rejects L-amino acids rather than detecting D-amino acids in the active site. By recycling D-aminoacyl-tRNA to D-amino acids and free tRNA molecules, this enzyme counteracts the toxicity associated with the formation of D-aminoacyl-tRNA entities in vivo and helps enforce protein L-homochirality. The polypeptide is D-aminoacyl-tRNA deacylase (Acidovorax sp. (strain JS42)).